Consider the following 259-residue polypeptide: MTDLTAAAQRALSLMDLTTLNDNDTDEKVTALCHQAKSLAGNTAAICIYPRFIPLARKVLREQGTPEIRIATVTNFPHGHDDIDIALAETQAAIAYGADEVDVVFPYRALMASNEQVGFEMVKACKVACAEADVLLKVIIETGELKEASLIRKASEISINAGADFIKTSTGKVPVNATLASAEIMMKVIHEMGVGETVGFKPAGGVRTAEEAAQYLALADHIMGDKWVDARHFRFGASSLLGNLLNTLGHQGQKQSSHY.

Residue D102 is the Proton donor/acceptor of the active site. Residue K167 is the Schiff-base intermediate with acetaldehyde of the active site. Catalysis depends on K201, which acts as the Proton donor/acceptor.

This sequence belongs to the DeoC/FbaB aldolase family. DeoC type 2 subfamily.

The protein resides in the cytoplasm. It carries out the reaction 2-deoxy-D-ribose 5-phosphate = D-glyceraldehyde 3-phosphate + acetaldehyde. The protein operates within carbohydrate degradation; 2-deoxy-D-ribose 1-phosphate degradation; D-glyceraldehyde 3-phosphate and acetaldehyde from 2-deoxy-alpha-D-ribose 1-phosphate: step 2/2. In terms of biological role, catalyzes a reversible aldol reaction between acetaldehyde and D-glyceraldehyde 3-phosphate to generate 2-deoxy-D-ribose 5-phosphate. In Photorhabdus laumondii subsp. laumondii (strain DSM 15139 / CIP 105565 / TT01) (Photorhabdus luminescens subsp. laumondii), this protein is Deoxyribose-phosphate aldolase.